The primary structure comprises 103 residues: UPF0145 protein BCE33L0904 (103 aa).

Belongs to the UPF0145 family.

This Bacillus cereus (strain ZK / E33L) protein is UPF0145 protein BCE33L0904.